Consider the following 244-residue polypeptide: MAQAVEEWYKQMPIITRSYLTAAVITTVGCSLDIISPYNLYLNPTLVVKQYQYWRLVTNFLYFRKMDLDFMFHMFFLARYCKLLEENSFRGKTADFLYMLLFGASVLTGIVLIGGMIPYLSASFAKIIFLSNSLTFMMVYVWSKQNPYIHMSFLGLFTFTAAYLPWVLLGFSILVGASAWVDLLGMIAGHAYYFLAEVYPRMTNRRPLKTPSFLKALFADEPVVVARPEDVRFAAAPFDEIHQD.

At 1 to 21 the chain is on the cytoplasmic side; sequence MAQAVEEWYKQMPIITRSYLT. A helical membrane pass occupies residues 22–42; it reads AAVITTVGCSLDIISPYNLYL. Over 43-96 the chain is Lumenal; it reads NPTLVVKQYQYWRLVTNFLYFRKMDLDFMFHMFFLARYCKLLEENSFRGKTADF. Residues 97–117 form a helical membrane-spanning segment; sequence LYMLLFGASVLTGIVLIGGMI. The Cytoplasmic portion of the chain corresponds to 118–121; sequence PYLS. Residues 122–142 form a helical membrane-spanning segment; it reads ASFAKIIFLSNSLTFMMVYVW. The Lumenal segment spans residues 143–152; that stretch reads SKQNPYIHMS. The helical transmembrane segment at 153–173 threads the bilayer; it reads FLGLFTFTAAYLPWVLLGFSI. The Cytoplasmic segment spans residues 174-244; that stretch reads LVGASAWVDL…AAPFDEIHQD (71 aa).

Belongs to the derlin family.

It localises to the endoplasmic reticulum membrane. In terms of biological role, may be involved in the degradation process of specific misfolded endoplasmic reticulum (ER) luminal proteins. The sequence is that of Derlin-2.2 (DER2.2) from Arabidopsis thaliana (Mouse-ear cress).